A 310-amino-acid polypeptide reads, in one-letter code: Ribosomal protein L11 methyltransferase (310 aa).

4 residues coordinate S-adenosyl-L-methionine: Thr156, Gly179, Asp201, and Asn246.

This sequence belongs to the methyltransferase superfamily. PrmA family.

The protein resides in the cytoplasm. It carries out the reaction L-lysyl-[protein] + 3 S-adenosyl-L-methionine = N(6),N(6),N(6)-trimethyl-L-lysyl-[protein] + 3 S-adenosyl-L-homocysteine + 3 H(+). Methylates ribosomal protein L11. The polypeptide is Ribosomal protein L11 methyltransferase (Desulfatibacillum aliphaticivorans).